Reading from the N-terminus, the 273-residue chain is Putative phosphoenolpyruvate synthase regulatory protein (273 aa).

153–160 (GVSRSGKT) serves as a coordination point for ADP.

Belongs to the pyruvate, phosphate/water dikinase regulatory protein family. PSRP subfamily.

It catalyses the reaction [pyruvate, water dikinase] + ADP = [pyruvate, water dikinase]-phosphate + AMP + H(+). The catalysed reaction is [pyruvate, water dikinase]-phosphate + phosphate + H(+) = [pyruvate, water dikinase] + diphosphate. Bifunctional serine/threonine kinase and phosphorylase involved in the regulation of the phosphoenolpyruvate synthase (PEPS) by catalyzing its phosphorylation/dephosphorylation. The protein is Putative phosphoenolpyruvate synthase regulatory protein of Polaromonas naphthalenivorans (strain CJ2).